The primary structure comprises 219 residues: NAD(P)H-quinone oxidoreductase subunit I (219 aa).

2 consecutive 4Fe-4S ferredoxin-type domains span residues 55-84 and 95-124; these read GRIHYEFDKCIACEVCVRVCPINLPVVDWV and RNYSIDFGVCIFCGNCVEYCPTNCLSMTEE. [4Fe-4S] cluster contacts are provided by cysteine 64, cysteine 67, cysteine 70, cysteine 74, cysteine 104, cysteine 107, cysteine 110, and cysteine 114. The segment at 192–219 is disordered; that stretch reads LKAAGSMKAAEDERESSSSASNMEESAG. Over residues 208–219 the composition is skewed to low complexity; the sequence is SSSASNMEESAG.

The protein belongs to the complex I 23 kDa subunit family. In terms of assembly, NDH-1 is composed of at least 11 different subunits. Requires [4Fe-4S] cluster as cofactor.

The protein resides in the cellular thylakoid membrane. It catalyses the reaction a plastoquinone + NADH + (n+1) H(+)(in) = a plastoquinol + NAD(+) + n H(+)(out). The enzyme catalyses a plastoquinone + NADPH + (n+1) H(+)(in) = a plastoquinol + NADP(+) + n H(+)(out). NDH-1 shuttles electrons from an unknown electron donor, via FMN and iron-sulfur (Fe-S) centers, to quinones in the respiratory and/or the photosynthetic chain. The immediate electron acceptor for the enzyme in this species is believed to be plastoquinone. Couples the redox reaction to proton translocation, and thus conserves the redox energy in a proton gradient. This chain is NAD(P)H-quinone oxidoreductase subunit I, found in Synechococcus sp. (strain CC9311).